A 472-amino-acid chain; its full sequence is MMPRTIIEKIWDQHIVKHGEGKPDLLYIDLHLIHEVTSPQAFEGLRQKGRKVRRPQNTFATMDHNIPTVNRFEIKDEVAKRQVTALERNCEEFGVRLADLHSVDQGIVHVVGPELGLTLPGKTIVCGDSHTSTHGAFGALAFGIGTSEVEHVLSTQTLWQQRPKTLEVRVDGTLQKGVTAKDVILAVIGKYGVKFGTGYVIEYTGEVFRNMTMDERMTVCNMSIEAGARAGLIAPDEVTFEYCKNRKYTPKGEEFDKAVEEWKALRTDPGAVYDKSIVLDGNKISPMVTWGINPGMVLPVDSEVPAPESFSAEDDKKEAIRAYEYMGLTPHQKIEDIKVEHVFIGSCTNSRMTDLRQAADMIKGKKVADSVRAIVVPGSQSVKLQAEKEGLDQIFLEAGFEWRESGCSMCLSMNNDVVPEGERCASTSNRNFEGRQGKGARTHLVSPAMAAMAAIHGHFVDVRKFYQEKTVV.

[4Fe-4S] cluster is bound by residues C347, C407, and C410.

This sequence belongs to the aconitase/IPM isomerase family. LeuC type 1 subfamily. In terms of assembly, heterodimer of LeuC and LeuD. [4Fe-4S] cluster serves as cofactor.

The enzyme catalyses (2R,3S)-3-isopropylmalate = (2S)-2-isopropylmalate. It participates in amino-acid biosynthesis; L-leucine biosynthesis; L-leucine from 3-methyl-2-oxobutanoate: step 2/4. In terms of biological role, catalyzes the isomerization between 2-isopropylmalate and 3-isopropylmalate, via the formation of 2-isopropylmaleate. This chain is 3-isopropylmalate dehydratase large subunit, found in Bacillus subtilis (strain 168).